We begin with the raw amino-acid sequence, 206 residues long: Ribosomal RNA small subunit methyltransferase G (206 aa).

Residues Gly73, Leu78, 124 to 125, and Arg139 contribute to the S-adenosyl-L-methionine site; that span reads VE.

Belongs to the methyltransferase superfamily. RNA methyltransferase RsmG family.

It localises to the cytoplasm. The enzyme catalyses guanosine(527) in 16S rRNA + S-adenosyl-L-methionine = N(7)-methylguanosine(527) in 16S rRNA + S-adenosyl-L-homocysteine. Specifically methylates the N7 position of guanine in position 527 of 16S rRNA. The chain is Ribosomal RNA small subunit methyltransferase G from Yersinia enterocolitica serotype O:8 / biotype 1B (strain NCTC 13174 / 8081).